The sequence spans 299 residues: Cysteine synthase B (299 aa).

Lys-40 is modified (N6-(pyridoxal phosphate)lysine). Pyridoxal 5'-phosphate contacts are provided by residues Asn-70, 174–178, and Ser-261; that span reads GTGGT.

This sequence belongs to the cysteine synthase/cystathionine beta-synthase family. Pyridoxal 5'-phosphate serves as cofactor.

The enzyme catalyses O-acetyl-L-serine + hydrogen sulfide = L-cysteine + acetate. It functions in the pathway amino-acid biosynthesis; L-cysteine biosynthesis; L-cysteine from L-serine: step 2/2. This Campylobacter jejuni subsp. jejuni serotype O:2 (strain ATCC 700819 / NCTC 11168) protein is Cysteine synthase B (cysM).